A 412-amino-acid polypeptide reads, in one-letter code: Ornithine cyclodeaminase (412 aa).

NAD(+) is bound by residues asparagine 237, alanine 238, aspartate 316, threonine 348, methionine 349, leucine 350, histidine 351, aspartate 369, aspartate 392, and valine 393.

This sequence belongs to the AgrE/ArgZ ornithine cyclodeaminase family. NAD(+) serves as cofactor.

The catalysed reaction is L-ornithine = L-proline + NH4(+). Catalyzes the conversion of ornithine to proline, with the release of ammonia. This is Ornithine cyclodeaminase from Methanopyrus kandleri (strain AV19 / DSM 6324 / JCM 9639 / NBRC 100938).